A 434-amino-acid chain; its full sequence is Glycerol-3-phosphate acyltransferase 3 (434 aa).

The helical transmembrane segment at 14-34 (WLTLVLGFILLPSVFGVSLGI) threads the bilayer. A phosphoserine mark is found at Ser-68 and Ser-77. Helical transmembrane passes span 137-157 (ISLR…CVLL) and 161-181 (VTLA…VGQL). An HXXXXD motif motif is present at residues 229-234 (HTSPID).

Belongs to the 1-acyl-sn-glycerol-3-phosphate acyltransferase family. Widely expressed. Expressed in liver, kidney, testis, brain, heart, skeletal muscle, thyroid, prostate, thymus and placenta. Also expressed lung and adipose tissue.

It localises to the endoplasmic reticulum membrane. It catalyses the reaction sn-glycerol 3-phosphate + an acyl-CoA = a 1-acyl-sn-glycero-3-phosphate + CoA. The catalysed reaction is a 1-acyl-sn-glycero-3-phosphate + an acyl-CoA = a 1,2-diacyl-sn-glycero-3-phosphate + CoA. It carries out the reaction dodecanoyl-CoA + sn-glycerol 3-phosphate = 1-dodecanoyl-sn-glycerol 3-phosphate + CoA. The enzyme catalyses sn-glycerol 3-phosphate + hexadecanoyl-CoA = 1-hexadecanoyl-sn-glycero-3-phosphate + CoA. It catalyses the reaction sn-glycerol 3-phosphate + (9Z)-octadecenoyl-CoA = 1-(9Z-octadecenoyl)-sn-glycero-3-phosphate + CoA. The catalysed reaction is (9Z,12Z)-octadecadienoyl-CoA + sn-glycerol 3-phosphate = 1-(9Z,12Z)-octadecadienoyl-sn-glycero-3-phosphate + CoA. It carries out the reaction 1-tetradecanoyl-sn-glycerol 3-phosphate + (9Z)-octadecenoyl-CoA = 1-tetradecanoyl-2-(9Z)-octadecenoyl-sn-glycero-3-phosphate + CoA. The enzyme catalyses 1-hexadecanoyl-sn-glycero-3-phosphate + (9Z)-octadecenoyl-CoA = 1-hexadecanoyl-2-(9Z-octadecenoyl)-sn-glycero-3-phosphate + CoA. It catalyses the reaction 1-(9Z-octadecenoyl)-sn-glycero-3-phosphate + (9Z)-octadecenoyl-CoA = 1,2-di-(9Z-octadecenoyl)-sn-glycero-3-phosphate + CoA. The catalysed reaction is 1-(6Z,9Z,12Z-octadecatrienoyl)-sn-glycero-3-phosphate + (9Z)-octadecenoyl-CoA = (6Z,9Z,12Z)-octadecatrienoyl-2-(9Z)-octadecenoyl-sn-glycero-3-phosphate + CoA. It carries out the reaction 1-(9Z,12Z,15Z)-octadecatrienoyl-sn-glycero-3-phosphate + (9Z)-octadecenoyl-CoA = 1-(9Z,12Z,15Z)-octadecatrienoyl-2-(9Z)-octadecenoyl-sn-glycero-3-phosphate + CoA. The enzyme catalyses 1-(9Z-octadecenoyl)-sn-glycero-3-phosphate + tetradecanoyl-CoA = 1-(9Z)-octadecenoyl-2-tetradecanoyl-sn-glycero-3-phosphate + CoA. It catalyses the reaction 1-(9Z-octadecenoyl)-sn-glycero-3-phosphate + hexadecanoyl-CoA = 1-(9Z)-octadecenoyl-2-hexadecanoyl-sn-glycero-3-phosphate + CoA. The catalysed reaction is 1-(9Z-octadecenoyl)-sn-glycero-3-phosphate + octadecanoyl-CoA = 1-(9Z-octadecenoyl)-2-octadecanoyl-sn-glycero-3-phosphate + CoA. It carries out the reaction 1-(9Z-octadecenoyl)-sn-glycero-3-phosphate + (9Z,12Z)-octadecadienoyl-CoA = 1-(9Z)-octadecenoyl-2-(9Z,12Z)-octadecadienoyl-sn-glycero-3-phosphate + CoA. The enzyme catalyses 1-(5Z,8Z,11Z,14Z-eicosatetraenoyl)-sn-glycero-3-phosphate + (9Z)-octadecenoyl-CoA = 1-(5Z,8Z,11Z,14Z)-eicosatetraenoyl-2-(9Z)-octadecenoyl-sn-glycero-3-phosphate + CoA. It participates in glycerolipid metabolism; triacylglycerol biosynthesis. The protein operates within phospholipid metabolism; CDP-diacylglycerol biosynthesis; CDP-diacylglycerol from sn-glycerol 3-phosphate: step 1/3. With respect to regulation, inhibited by N-ethylmaleimide (NEM). Its function is as follows. Converts glycerol-3-phosphate to 1-acyl-sn-glycerol-3-phosphate (lysophosphatidic acid or LPA) by incorporating an acyl moiety at the sn-1 position of the glycerol backbone. Also converts LPA into 1,2-diacyl-sn-glycerol-3-phosphate (phosphatidic acid or PA) by incorporating an acyl moiety at the sn-2 position of the glycerol backbone. Protects cells against lipotoxicity. In Homo sapiens (Human), this protein is Glycerol-3-phosphate acyltransferase 3.